A 66-amino-acid polypeptide reads, in one-letter code: Large ribosomal subunit protein bL35 (66 aa).

It belongs to the bacterial ribosomal protein bL35 family.

The polypeptide is Large ribosomal subunit protein bL35 (Ruegeria sp. (strain TM1040) (Silicibacter sp.)).